The following is a 186-amino-acid chain: UPF0301 protein Tgr7_2910 (186 aa).

This sequence belongs to the UPF0301 (AlgH) family.

This is UPF0301 protein Tgr7_2910 from Thioalkalivibrio sulfidiphilus (strain HL-EbGR7).